Consider the following 506-residue polypeptide: Glutamate--tRNA ligase (506 aa).

Residues Pro24–Gly34 carry the 'HIGH' region motif. The Zn(2+) site is built by Cys121, Cys123, Cys148, and His150. A 'KMSKS' region motif is present at residues Lys266 to Arg270. Lys269 lines the ATP pocket.

It belongs to the class-I aminoacyl-tRNA synthetase family. Glutamate--tRNA ligase type 1 subfamily. Monomer. Zn(2+) is required as a cofactor.

It localises to the cytoplasm. It catalyses the reaction tRNA(Glu) + L-glutamate + ATP = L-glutamyl-tRNA(Glu) + AMP + diphosphate. Its function is as follows. Catalyzes the attachment of glutamate to tRNA(Glu) in a two-step reaction: glutamate is first activated by ATP to form Glu-AMP and then transferred to the acceptor end of tRNA(Glu). The polypeptide is Glutamate--tRNA ligase (Borrelia duttonii (strain Ly)).